The chain runs to 198 residues: Na(+)-translocating NADH-quinone reductase subunit E (198 aa).

The next 6 helical transmembrane spans lie at 11–31 (SIFI…FLAV), 39–59 (FGLG…NNLV), 77–97 (FLSF…LEMI), 110–130 (GIFL…SFMV), 140–160 (VVYG…LAGI), and 176–196 (LGIT…FSGV).

The protein belongs to the NqrDE/RnfAE family. In terms of assembly, composed of six subunits; NqrA, NqrB, NqrC, NqrD, NqrE and NqrF.

It localises to the cell inner membrane. The enzyme catalyses a ubiquinone + n Na(+)(in) + NADH + H(+) = a ubiquinol + n Na(+)(out) + NAD(+). Its function is as follows. NQR complex catalyzes the reduction of ubiquinone-1 to ubiquinol by two successive reactions, coupled with the transport of Na(+) ions from the cytoplasm to the periplasm. NqrA to NqrE are probably involved in the second step, the conversion of ubisemiquinone to ubiquinol. This chain is Na(+)-translocating NADH-quinone reductase subunit E, found in Aliivibrio fischeri (strain ATCC 700601 / ES114) (Vibrio fischeri).